The sequence spans 269 residues: HTH-type transcriptional activator ArnR1 (269 aa).

At 1 to 217 (MSSMNKRVFD…LLKLTGSYRY (217 aa)) the chain is on the cytoplasmic side. The H-T-H motif DNA-binding region spans 42–65 (TTEISQTINTSRKSIIDAIRKLVD). The chain crosses the membrane as a helical span at residues 218-238 (EIALTKVMLFNVISIPVLMYL). At 239–241 (KDQ) the chain is on the extracellular side. Residues 242–262 (LGILEAIWLYVIILLPLLSIF) traverse the membrane as a helical segment. Over 263-269 (AEIFNRI) the chain is Cytoplasmic.

Its subcellular location is the cell membrane. Its function is as follows. Involved in regulation of archaellar gene expression. May activate flaB transcription upon nutrient starvation by acting on the flaB promoter. The protein is HTH-type transcriptional activator ArnR1 of Sulfolobus acidocaldarius (strain ATCC 33909 / DSM 639 / JCM 8929 / NBRC 15157 / NCIMB 11770).